The following is a 281-amino-acid chain: Insecticidal crystal toxin protein (281 aa).

9 antigenic epitope regions span residues N54–F78, I91–A104, G108–G116, F131–I148, A160–L172, K189–L196, Q208–R216, T221–T236, and K247–N256.

The protein belongs to the delta endotoxin family.

Promotes colloidosmotic lysis by binding to the midgut epithelial cells of insects. Active against Mamestra brassicae. This Bacillus thuringiensis subsp. kurstaki protein is Insecticidal crystal toxin protein.